A 67-amino-acid polypeptide reads, in one-letter code: Large ribosomal subunit protein uL29 (67 aa).

Belongs to the universal ribosomal protein uL29 family.

The chain is Large ribosomal subunit protein uL29 from Ruminiclostridium cellulolyticum (strain ATCC 35319 / DSM 5812 / JCM 6584 / H10) (Clostridium cellulolyticum).